An 84-amino-acid chain; its full sequence is RNA-binding protein SAHV_0542 (84 aa).

This sequence belongs to the eukaryotic ribosomal protein eL8 family.

This Staphylococcus aureus (strain Mu3 / ATCC 700698) protein is RNA-binding protein SAHV_0542.